Reading from the N-terminus, the 616-residue chain is Dihydroxy-acid dehydratase (616 aa).

Asp81 lines the Mg(2+) pocket. Cys122 contributes to the [2Fe-2S] cluster binding site. Residues Asp123 and Lys124 each contribute to the Mg(2+) site. Residue Lys124 is modified to N6-carboxylysine. Residue Cys195 coordinates [2Fe-2S] cluster. A Mg(2+)-binding site is contributed by Glu491. The Proton acceptor role is filled by Ser517.

Belongs to the IlvD/Edd family. As to quaternary structure, homodimer. The cofactor is [2Fe-2S] cluster. It depends on Mg(2+) as a cofactor.

The catalysed reaction is (2R)-2,3-dihydroxy-3-methylbutanoate = 3-methyl-2-oxobutanoate + H2O. It carries out the reaction (2R,3R)-2,3-dihydroxy-3-methylpentanoate = (S)-3-methyl-2-oxopentanoate + H2O. It participates in amino-acid biosynthesis; L-isoleucine biosynthesis; L-isoleucine from 2-oxobutanoate: step 3/4. The protein operates within amino-acid biosynthesis; L-valine biosynthesis; L-valine from pyruvate: step 3/4. Functions in the biosynthesis of branched-chain amino acids. Catalyzes the dehydration of (2R,3R)-2,3-dihydroxy-3-methylpentanoate (2,3-dihydroxy-3-methylvalerate) into 2-oxo-3-methylpentanoate (2-oxo-3-methylvalerate) and of (2R)-2,3-dihydroxy-3-methylbutanoate (2,3-dihydroxyisovalerate) into 2-oxo-3-methylbutanoate (2-oxoisovalerate), the penultimate precursor to L-isoleucine and L-valine, respectively. In Salmonella dublin (strain CT_02021853), this protein is Dihydroxy-acid dehydratase.